The primary structure comprises 510 residues: Protein fork head (510 aa).

2 disordered regions span residues 1–62 (MQKL…SPLA) and 175–205 (AMPP…YRRS). Residues 20-39 (SGGGGPPSGGGGGGGGGGGG) are compositionally biased toward gly residues. The segment covering 47-60 (NNPNPTSNGGSMSP) has biased composition (low complexity). S187 and S190 each carry phosphoserine. Residues 209-300 (AKPPYSYISL…GNMFENGCYL (92 aa)) constitute a DNA-binding region (fork-head). The interval 309–359 (EKKEAIRQLHKSPSHSSLEATSPGKKDHEDSHHMHHHHHSRLDHHQHHKEA) is disordered. A phosphoserine mark is found at S320, S322, and S330. The segment covering 341-356 (HMHHHHHSRLDHHQHH) has biased composition (basic residues).

The protein localises to the nucleus. Functionally, fkh promotes terminal as opposed to segmental development. In the absence of fkh, this developmental switch does not occur. The nuclear localization of the fkh protein suggest that fkh regulates the transcription of other, subordinate, genes. The sequence is that of Protein fork head (fkh) from Drosophila melanogaster (Fruit fly).